A 976-amino-acid polypeptide reads, in one-letter code: Dolichyl-phosphooligosaccharide-protein glycotransferase 1 (976 aa).

The Cytoplasmic portion of the chain corresponds to methionine 1 to threonine 21. The chain crosses the membrane as a helical span at residues tyrosine 22–phenylalanine 42. Topologically, residues tyrosine 43–glutamate 112 are extracellular. The short motif at aspartate 55–aspartate 57 is the DXD motif 1 element. Aspartate 57 contacts Mn(2+). A helical transmembrane segment spans residues leucine 113 to leucine 133. The Cytoplasmic segment spans residues leucine 134–glycine 135. Residues arginine 136–alanine 156 form a helical membrane-spanning segment. The Extracellular segment spans residues asparagine 157–asparagine 165. The chain crosses the membrane as a helical span at residues alanine 166 to tyrosine 186. Residues arginine 167 and aspartate 169 each coordinate Mn(2+). Residues arginine 167 to aspartate 169 carry the DXD motif 2 motif. At leucine 187–threonine 193 the chain is on the cytoplasmic side. A helical transmembrane segment spans residues arginine 194 to asparagine 214. Glycine 215 is a topological domain (extracellular). Residues serine 216 to isoleucine 236 form a helical membrane-spanning segment. Over phenylalanine 237 to valine 247 the chain is Cytoplasmic. A helical membrane pass occupies residues lysine 248–glycine 268. Position 269 (isoleucine 269) is a topological domain, extracellular. The helical transmembrane segment at valine 270–leucine 290 threads the bilayer. Over valine 291–lysine 306 the chain is Cytoplasmic. A helical membrane pass occupies residues histidine 307–valine 327. At glycine 328–lysine 360 the chain is on the extracellular side. The TIXE motif signature appears at threonine 347–glutamate 350. The helical transmembrane segment at alanine 361–leucine 381 threads the bilayer. The Cytoplasmic portion of the chain corresponds to isoleucine 382 to lysine 396. The helical transmembrane segment at serine 397–leucine 417 threads the bilayer. Position 418 (alanine 418) is a topological domain, extracellular. Residues valine 419–phenylalanine 439 form a helical membrane-spanning segment. Arginine 420 lines the a glycophospholipid pocket. The Cytoplasmic segment spans residues serine 440–isoleucine 453. A helical transmembrane segment spans residues lysine 454–proline 474. Residues valine 475–glutamate 976 are Extracellular-facing. Residues tryptophan 513–aspartate 515 are interacts with target acceptor peptide in protein substrate. The WWDYG motif signature appears at tryptophan 513 to glycine 517. Tyrosine 518 contributes to the a glycophospholipid binding site. The short motif at aspartate 573–isoleucine 580 is the DK motif element.

This sequence belongs to the STT3 family. It depends on Mn(2+) as a cofactor. Requires Mg(2+) as cofactor.

The protein localises to the cell membrane. The catalysed reaction is an archaeal dolichyl phosphooligosaccharide + [protein]-L-asparagine = an archaeal dolichyl phosphate + a glycoprotein with the oligosaccharide chain attached by N-beta-D-glycosyl linkage to a protein L-asparagine.. The protein operates within protein modification; protein glycosylation. Oligosaccharyl transferase (OST) that catalyzes the initial transfer of a defined glycan (ManNAcXyl(2)GlcAMan(2)GalNAc in Pyrococcus) from the lipid carrier dolichol-monophosphate to an asparagine residue within an Asn-X-Ser/Thr consensus motif in nascent polypeptide chains, the first step in protein N-glycosylation. This Pyrococcus horikoshii (strain ATCC 700860 / DSM 12428 / JCM 9974 / NBRC 100139 / OT-3) protein is Dolichyl-phosphooligosaccharide-protein glycotransferase 1 (aglB1).